The following is a 1098-amino-acid chain: Bifunctional helicase and thymine dioxygenase JBP2 (1098 aa).

Positions 1-540 (MLNGLTRVST…PPLFVPTRLA (540 aa)) are thymine dioxygenase. Fe cation is bound by residues His-415, Asp-417, and His-465. A 2-oxoglutarate-binding site is contributed by Arg-479. The DNA Helicase stretch occupies residues 541–1098 (SHLAPVQLAA…RYQESVRESE (558 aa)). A Helicase ATP-binding domain is found at 555–730 (VERTEKQSGC…YRLVGWVNKG (176 aa)). 568 to 575 (MTMGLGKT) contacts ATP. The short motif at 681 to 684 (DEGH) is the DEAH box element. The Helicase C-terminal domain maps to 897 to 1057 (VLVDIVLRVQ…ALPDELEDCA (161 aa)).

In the C-terminal section; belongs to the SNF2/RAD54 helicase family. This sequence in the N-terminal section; belongs to the TET family. JBP2 subfamily. Fe(2+) is required as a cofactor.

It localises to the nucleus. It carries out the reaction ATP + H2O = ADP + phosphate + H(+). It catalyses the reaction thymine + 2-oxoglutarate + O2 = 5-hydroxymethyluracil + succinate + CO2. Dioxygenase that catalyzes the first step of DNA base J (beta-d-glucosyl-HOMedU) biosynthesis by converting thymine to 5-hydroxymethyluracil (HOMedU). DNA base J is a hypermodified thymidine residue found in the genome of kinetoplastid parasites, which is localized primarily to repetitive DNA, namely the telomeres, and is implicated in the regulation of antigenic variation. Probably also acts as a DNA helicase. Recognizes and binds specific regions of the genome, hydrolyzes ATP and allows the DNA base J de novo synthesis. Involved in initial synthesis of DNA base J, JBP1 being able to act via the basal level of DNA base J and propagate further synthesis. In contrast to JBP1, it does not specifically bind DNA base J, however it binds chromatin. This is Bifunctional helicase and thymine dioxygenase JBP2 (JBP2) from Leishmania major.